The following is a 457-amino-acid chain: Nucleoprotein (457 aa).

Residues 1 to 62 are disordered; it reads MSFVPGQENA…ATTQPNSGSV (62 aa). A compositionally biased stretch (low complexity) spans 9-23; it reads NAGSRSSSGNRAGNG. The segment covering 49-61 has biased composition (polar residues); the sequence is PKQTATTQPNSGS. The RNA-binding stretch occupies residues 56–197; the sequence is QPNSGSVVPH…GYYVEGSGRS (142 aa). One can recognise a CoV N NTD domain in the interval 64–193; it reads PHYSWFSGIT…FLPQGYYVEG (130 aa). Arg-109, Arg-125, and Arg-167 together coordinate RNA. Disordered regions lie at residues 158-178, 190-228, 249-290, and 382-429; these read TRTS…IPTR, YVEG…PASI, AGQP…FGKR, and QDGG…VNRE. Phosphoserine; by host is present on Ser-170. At Thr-177 the chain carries Phosphothreonine; by host. Residues 193 to 212 show a composition bias toward low complexity; it reads GSGRSAPASRSGSRSQSRGP. The residue at position 194 (Ser-194) is a Phosphoserine; by host. Residues 215–225 are compositionally biased toward polar residues; sequence RARSSSNQRQP. A CoV N CTD domain is found at 260–383; the sequence is AKEVRQKILN…ENLNAYQNQD (124 aa). Basic residues predominate over residues 267 to 277; it reads ILNKPRQKRTP. The tract at residues 267 to 384 is dimerization; it reads ILNKPRQKRT…NLNAYQNQDG (118 aa). A Phosphoserine; by host modification is found at Ser-390. A Phosphothreonine; by host modification is found at Thr-431.

It belongs to the betacoronavirus nucleocapsid protein family. Homooligomer. Both monomeric and oligomeric forms interact with RNA. Interacts with protein M. Interacts with NSP3; this interaction serves to tether the genome to the newly translated replicase-transcriptase complex at a very early stage of infection. In terms of processing, ADP-ribosylated. The ADP-ribosylation is retained in the virion during infection. Post-translationally, phosphorylated on serine and threonine residues.

It is found in the virion. It localises to the host endoplasmic reticulum-Golgi intermediate compartment. Its subcellular location is the host Golgi apparatus. Functionally, packages the positive strand viral genome RNA into a helical ribonucleocapsid (RNP) and plays a fundamental role during virion assembly through its interactions with the viral genome and membrane protein M. Plays an important role in enhancing the efficiency of subgenomic viral RNA transcription as well as viral replication. The chain is Nucleoprotein from Puffinus puffinus (Manx shearwater).